The chain runs to 2699 residues: UPF0648 protein C3H5.09c (2699 aa).

Residue N21 is glycosylated (N-linked (GlcNAc...) asparagine). The chain crosses the membrane as a helical span at residues 24–44 (FVWVVIATGFLFHLVLFVLSY). N-linked (GlcNAc...) asparagine glycosylation is found at N288, N293, N334, N345, N433, N507, N551, N655, N760, N993, N1000, N1003, N1006, and N1009. Residues 975 to 1021 (KAKDPSPKSASESSSFYQNGSDIDDNDSNSSNTSNHTTENANAQQRK) form a disordered region. The segment covering 981 to 995 (PKSASESSSFYQNGS) has biased composition (low complexity). Residues 1006-1033 (NTSNHTTENANAQQRKLEDLNRSFEDFL) are a coiled coil. Residues 1010–1019 (HTTENANAQQ) are compositionally biased toward polar residues. Residues N1026, N1039, N1046, N1236, N1255, N1344, N1527, N1595, N1791, N1916, N2032, N2048, N2256, N2285, N2388, N2407, N2417, N2508, and N2622 are each glycosylated (N-linked (GlcNAc...) asparagine). Positions 1758-1818 (QYELLQKRRK…TLSDHYRLLE (61 aa)) form a coiled coil. The interval 2393–2447 (FPHIYSRNHDKRKENGSQGEADNSNYSGSLMRRRTNDQEEDALATPSSSRRDSRS) is disordered. The segment covering 2408-2420 (GSQGEADNSNYSG) has biased composition (polar residues). Disordered stretches follow at residues 2606-2632 (AEENQEEGSPASAISRNHSTRSSLNSP) and 2647-2676 (ADIVKRHIPPTINGKRSKNKGNEGSNARVD). Residues 2617-2632 (SAISRNHSTRSSLNSP) show a composition bias toward polar residues.

The protein belongs to the UPF0648 family.

Its subcellular location is the membrane. This chain is UPF0648 protein C3H5.09c, found in Schizosaccharomyces pombe (strain 972 / ATCC 24843) (Fission yeast).